Here is a 159-residue protein sequence, read N- to C-terminus: Capsid protein (159 aa).

Position 2 is an N-acetylserine; by host (serine 2).

This sequence belongs to the virgaviridae capsid protein family.

It is found in the virion. In terms of biological role, capsid protein self-assembles to form rod-shaped virions about 18 nm in diameter with a central canal enclosing the viral genomic RNA. The polypeptide is Capsid protein (CP) (Nicotiana tabacum (Common tobacco)).